The following is a 331-amino-acid chain: Biotin synthase (331 aa).

Positions 40 to 269 (YRVQLASLLS…HARVRLSAGR (230 aa)) constitute a Radical SAM core domain. Residues Cys-55, Cys-59, and Cys-62 each coordinate [4Fe-4S] cluster. [2Fe-2S] cluster-binding residues include Cys-100, Cys-132, Cys-192, and Arg-264.

This sequence belongs to the radical SAM superfamily. Biotin synthase family. Homodimer. [4Fe-4S] cluster serves as cofactor. Requires [2Fe-2S] cluster as cofactor.

The enzyme catalyses (4R,5S)-dethiobiotin + (sulfur carrier)-SH + 2 reduced [2Fe-2S]-[ferredoxin] + 2 S-adenosyl-L-methionine = (sulfur carrier)-H + biotin + 2 5'-deoxyadenosine + 2 L-methionine + 2 oxidized [2Fe-2S]-[ferredoxin]. It functions in the pathway cofactor biosynthesis; biotin biosynthesis; biotin from 7,8-diaminononanoate: step 2/2. Its function is as follows. Catalyzes the conversion of dethiobiotin (DTB) to biotin by the insertion of a sulfur atom into dethiobiotin via a radical-based mechanism. The polypeptide is Biotin synthase (Synechococcus sp. (strain CC9605)).